The primary structure comprises 218 residues: Antifreeze protein Maxi (218 aa).

The N-terminal stretch at 1–23 (MALSLFTVGQFIFLFWTISITEA) is a signal peptide.

It belongs to the type-I AFP family. Homodimer. Detected in blood serum (at protein level). Detected in liver.

It is found in the secreted. In terms of biological role, contributes to protect fish blood from freezing at subzero sea water temperatures. Lowers the blood freezing point by about 1.1 degrees at a concentration of 0.1 mg/ml, and by about 1.5 degrees at a concentration of 0.2 mg/ml. Binds to nascent ice crystals and prevents further growth. This Pseudopleuronectes americanus (Winter flounder) protein is Antifreeze protein Maxi.